The chain runs to 307 residues: Mycothiol acetyltransferase (307 aa).

N-acetyltransferase domains follow at residues 15-158 and 164-307; these read HTLD…LAEP and VTVR…RTES. Glutamate 46 contributes to the 1D-myo-inositol 2-(L-cysteinylamino)-2-deoxy-alpha-D-glucopyranoside binding site. 90-92 is a binding site for acetyl-CoA; it reads LVV. 1D-myo-inositol 2-(L-cysteinylamino)-2-deoxy-alpha-D-glucopyranoside-binding residues include glutamate 191, lysine 230, and glutamate 239. Acetyl-CoA-binding positions include 243 to 245 and 250 to 256; these read VGV and QGGGLGK. Tyrosine 277 serves as a coordination point for 1D-myo-inositol 2-(L-cysteinylamino)-2-deoxy-alpha-D-glucopyranoside.

It belongs to the acetyltransferase family. MshD subfamily. Monomer.

It catalyses the reaction 1D-myo-inositol 2-(L-cysteinylamino)-2-deoxy-alpha-D-glucopyranoside + acetyl-CoA = mycothiol + CoA + H(+). Its function is as follows. Catalyzes the transfer of acetyl from acetyl-CoA to desacetylmycothiol (Cys-GlcN-Ins) to form mycothiol. The chain is Mycothiol acetyltransferase from Streptomyces griseus subsp. griseus (strain JCM 4626 / CBS 651.72 / NBRC 13350 / KCC S-0626 / ISP 5235).